A 575-amino-acid polypeptide reads, in one-letter code: Probable lysosomal cobalamin transporter (575 aa).

Helical transmembrane passes span 8-28 (LIWVVYAVVVVVLFAVASVFI), 46-66 (IVAITSLLATILLLPVDVALV), 95-115 (LVYYILYSLDILLCLLVVPFV), 144-164 (YTLSFIAILIILFLVGVFVPI), and 188-208 (ALTFALGLLITIGMYVYALHT). N233 carries N-linked (GlcNAc...) asparagine glycosylation. Helical transmembrane passes span 314 to 334 (LVGLILLLLVLLIWVSMILTA), 376 to 396 (AIFTMLVLLLFFGTVVGIATV), 420 to 440 (VMTAILMLSILALNYSISMIV), and 504 to 524 (FGAIFFWSQFAFIGVYLLALI). Positions 537 to 549 (QLDEDAEEAEEEA) are enriched in acidic residues. The segment at 537–556 (QLDEDAEEAEEEALLSGSRR) is disordered.

Belongs to the LIMR family. LMBRD1 subfamily.

Its subcellular location is the lysosome membrane. Probable lysosomal cobalamin transporter. Required to export cobalamin from lysosomes allowing its conversion to cofactors. This Emericella nidulans (strain FGSC A4 / ATCC 38163 / CBS 112.46 / NRRL 194 / M139) (Aspergillus nidulans) protein is Probable lysosomal cobalamin transporter.